The primary structure comprises 143 residues: UPF0251 protein CA_C3166 (143 aa).

This sequence belongs to the UPF0251 family.

The chain is UPF0251 protein CA_C3166 from Clostridium acetobutylicum (strain ATCC 824 / DSM 792 / JCM 1419 / IAM 19013 / LMG 5710 / NBRC 13948 / NRRL B-527 / VKM B-1787 / 2291 / W).